The following is a 233-amino-acid chain: Small ribosomal subunit protein uS3 (233 aa).

In terms of domain architecture, KH type-2 spans 39–107 (VRQFLMKKLV…PAQINISEVR (69 aa)).

This sequence belongs to the universal ribosomal protein uS3 family. In terms of assembly, part of the 30S ribosomal subunit. Forms a tight complex with proteins S10 and S14.

Functionally, binds the lower part of the 30S subunit head. Binds mRNA in the 70S ribosome, positioning it for translation. This Buchnera aphidicola subsp. Schizaphis graminum (strain Sg) protein is Small ribosomal subunit protein uS3.